A 196-amino-acid chain; its full sequence is Proteasome subunit beta 2 (196 aa).

The propeptide at 1–6 (MEELPS) is removed in mature form; by autocatalysis. The active-site Nucleophile is the T7.

This sequence belongs to the peptidase T1B family. The 20S proteasome core is composed of 14 alpha and 14 beta subunits that assemble into four stacked heptameric rings, resulting in a barrel-shaped structure. The two inner rings, each composed of seven catalytic beta subunits, are sandwiched by two outer rings, each composed of seven alpha subunits. The catalytic chamber with the active sites is on the inside of the barrel. Has a gated structure, the ends of the cylinder being occluded by the N-termini of the alpha-subunits. Is capped at one or both ends by the proteasome regulatory ATPase, PAN.

It localises to the cytoplasm. The enzyme catalyses Cleavage of peptide bonds with very broad specificity.. The formation of the proteasomal ATPase PAN-20S proteasome complex, via the docking of the C-termini of PAN into the intersubunit pockets in the alpha-rings, triggers opening of the gate for substrate entry. Interconversion between the open-gate and close-gate conformations leads to a dynamic regulation of the 20S proteasome proteolysis activity. Its function is as follows. Component of the proteasome core, a large protease complex with broad specificity involved in protein degradation. The sequence is that of Proteasome subunit beta 2 from Metallosphaera sedula (strain ATCC 51363 / DSM 5348 / JCM 9185 / NBRC 15509 / TH2).